A 581-amino-acid chain; its full sequence is Proline--tRNA ligase (581 aa).

The protein belongs to the class-II aminoacyl-tRNA synthetase family. ProS type 1 subfamily. As to quaternary structure, homodimer.

The protein localises to the cytoplasm. It carries out the reaction tRNA(Pro) + L-proline + ATP = L-prolyl-tRNA(Pro) + AMP + diphosphate. Its function is as follows. Catalyzes the attachment of proline to tRNA(Pro) in a two-step reaction: proline is first activated by ATP to form Pro-AMP and then transferred to the acceptor end of tRNA(Pro). As ProRS can inadvertently accommodate and process non-cognate amino acids such as alanine and cysteine, to avoid such errors it has two additional distinct editing activities against alanine. One activity is designated as 'pretransfer' editing and involves the tRNA(Pro)-independent hydrolysis of activated Ala-AMP. The other activity is designated 'posttransfer' editing and involves deacylation of mischarged Ala-tRNA(Pro). The misacylated Cys-tRNA(Pro) is not edited by ProRS. The chain is Proline--tRNA ligase from Verminephrobacter eiseniae (strain EF01-2).